Consider the following 156-residue polypeptide: Proline dehydrogenase transcriptional activator (156 aa).

In terms of domain architecture, HTH asnC-type spans 10 to 71 (LDHFDLKILE…VLNPQKLGVD (62 aa)). Residues 29–48 (VLQLSKRVGLSKTPCQTRLK) constitute a DNA-binding region (H-T-H motif).

In terms of biological role, transcriptional activator of the putA gene in response to proline. The polypeptide is Proline dehydrogenase transcriptional activator (putR) (Rhizobium radiobacter (Agrobacterium tumefaciens)).